Consider the following 116-residue polypeptide: CDKN2AIP N-terminal-like protein (116 aa).

Met1 is subject to N-acetylmethionine. In terms of domain architecture, XRN2-binding (XTBD) spans Ala24–Ser116.

It belongs to the CARF family. In terms of assembly, interacts with XRN2; the interaction is direct.

This is CDKN2AIP N-terminal-like protein (Cdkn2aipnl) from Mus musculus (Mouse).